A 492-amino-acid polypeptide reads, in one-letter code: Catalase-1 (492 aa).

Catalysis depends on residues H65 and N138. Y348 contacts heme.

This sequence belongs to the catalase family. Homotetramer. Heme is required as a cofactor.

It is found in the peroxisome. It localises to the glyoxysome. The enzyme catalyses 2 H2O2 = O2 + 2 H2O. In terms of biological role, occurs in almost all aerobically respiring organisms and serves to protect cells from the toxic effects of hydrogen peroxide. The sequence is that of Catalase-1 (CAT1) from Triticum aestivum (Wheat).